A 200-amino-acid chain; its full sequence is Rho GDP-dissociation inhibitor 2 (200 aa).

Positions 1-39 (MTEKDAQPQLEEADDDLDSKLNYKPPPQKSLKELQEMDK) are disordered. An N-acetylthreonine modification is found at Thr-2. Lys-20 is subject to N6-acetyllysine. Tyr-23 carries the phosphotyrosine modification. An N6-acetyllysine mark is found at Lys-24, Lys-39, Lys-46, Lys-101, and Lys-123. Residues 30 to 39 (SLKELQEMDK) show a composition bias toward basic and acidic residues. Ser-144 is subject to Phosphoserine. An N6-acetyllysine modification is found at Lys-174.

The protein belongs to the Rho GDI family. In terms of assembly, interacts with RHOA. Interacts with RAC1. Interacts with RAC2. Interacts with CDC42. Preferentially expressed in hematopoietic cells.

Its subcellular location is the cytoplasm. The protein localises to the cytosol. Functionally, regulates the GDP/GTP exchange reaction of the Rho proteins by inhibiting the dissociation of GDP from them, and the subsequent binding of GTP to them. Regulates reorganization of the actin cytoskeleton mediated by Rho family members. In Mus musculus (Mouse), this protein is Rho GDP-dissociation inhibitor 2 (Arhgdib).